Consider the following 165-residue polypeptide: Large ribosomal subunit protein uL10 (165 aa).

The protein belongs to the universal ribosomal protein uL10 family. As to quaternary structure, part of the ribosomal stalk of the 50S ribosomal subunit. The N-terminus interacts with L11 and the large rRNA to form the base of the stalk. The C-terminus forms an elongated spine to which L12 dimers bind in a sequential fashion forming a multimeric L10(L12)X complex.

Forms part of the ribosomal stalk, playing a central role in the interaction of the ribosome with GTP-bound translation factors. The chain is Large ribosomal subunit protein uL10 from Mycoplasma capricolum subsp. capricolum (strain California kid / ATCC 27343 / NCTC 10154).